Consider the following 704-residue polypeptide: Structure-specific endonuclease subunit SLX1 homolog (704 aa).

Residues 4–90 form the GIY-YIG domain; the sequence is RFHCVYLLTS…TASARLRHTI (87 aa). Disordered stretches follow at residues 157-180, 290-323, and 354-378; these read ESPRVGTQQHSQRSSSLQGQADGV, ASFASDSDDEDTRRLAPYCPSAGSSTPSPQRVRT, and GAALRSFSSPPPPRESSPRSASRPP. Polar residues-rich tracts occupy residues 161 to 175 and 311 to 320; these read VGTQQHSQRSSSLQG and AGSSTPSPQR. The SLX1-type zinc finger occupies 446 to 526; that stretch reads CSLCALPLQP…PSQPCPCPLC (81 aa). 2 disordered regions span residues 601–629 and 650–671; these read VPGAASTVPAPTMHAGPARRDAPRVSSPI and ASLAALSPTSASPISRHNGHSN. Residues 650–662 show a composition bias toward low complexity; sequence ASLAALSPTSASP.

It belongs to the SLX1 family. In terms of assembly, forms a heterodimer with a member of the SLX4 family. A divalent metal cation is required as a cofactor.

Its subcellular location is the nucleus. Functionally, catalytic subunit of a heterodimeric structure-specific endonuclease that resolves DNA secondary structures generated during DNA repair and recombination. Has endonuclease activity towards branched DNA substrates, introducing single-strand cuts in duplex DNA close to junctions with ss-DNA. In Leishmania major, this protein is Structure-specific endonuclease subunit SLX1 homolog.